Consider the following 152-residue polypeptide: Large ribosomal subunit protein uL15 (152 aa).

The interval 1 to 57 (MTSTLNTLKSNSGSRKKKLRKGRGIAAGQGASCGFGMRGQKSRSGRPTRPGFEGGQM) is disordered. Residues 14-23 (SRKKKLRKGR) are compositionally biased toward basic residues. A compositionally biased stretch (gly residues) spans 25-37 (IAAGQGASCGFGM).

It belongs to the universal ribosomal protein uL15 family. In terms of assembly, part of the 50S ribosomal subunit.

Binds to the 23S rRNA. This Prochlorococcus marinus (strain AS9601) protein is Large ribosomal subunit protein uL15.